The primary structure comprises 214 residues: Adenylate kinase (214 aa).

10 to 15 lines the ATP pocket; that stretch reads GAGKGT. The segment at 30-59 is NMP; sequence STGDMFRAAVKNETPLGLEAKSYMDKGHLV. AMP is bound by residues Thr31, Arg36, 57–59, 85–88, and Gln92; these read HLV and GFPR. The tract at residues 126 to 163 is LID; it reads GRWICPVCGASYHTMFNPPKEAGVCDKDGGKLYQREDD. Residue Arg127 coordinates ATP. Residues Cys130 and Cys133 each contribute to the Zn(2+) site. 136 to 137 is an ATP binding site; that stretch reads SY. Zn(2+)-binding residues include Cys150 and Asp153. Arg160 and Arg171 together coordinate AMP. Gln199 contributes to the ATP binding site.

This sequence belongs to the adenylate kinase family. In terms of assembly, monomer.

The protein localises to the cytoplasm. It catalyses the reaction AMP + ATP = 2 ADP. The protein operates within purine metabolism; AMP biosynthesis via salvage pathway; AMP from ADP: step 1/1. In terms of biological role, catalyzes the reversible transfer of the terminal phosphate group between ATP and AMP. Plays an important role in cellular energy homeostasis and in adenine nucleotide metabolism. The polypeptide is Adenylate kinase (Brevibacillus brevis (strain 47 / JCM 6285 / NBRC 100599)).